Here is a 177-residue protein sequence, read N- to C-terminus: MSRIGKKPVSLPQGVTATVNGQTVTAKGPKGELKFVVNDEVLVKMEGSEIAVQPRDQTKTARSKWGMSRTQIVNILHGVKDGFEKKLEITGVGYRAAMQGKNLQLALGFSHDVVYETPAGVTIAVPKPTEITVTGIDKQQVGQVAAEIREYRGPEPYKGKGVRYAGEKIVRKEGKKK.

It belongs to the universal ribosomal protein uL6 family. Part of the 50S ribosomal subunit.

In terms of biological role, this protein binds to the 23S rRNA, and is important in its secondary structure. It is located near the subunit interface in the base of the L7/L12 stalk, and near the tRNA binding site of the peptidyltransferase center. The sequence is that of Large ribosomal subunit protein uL6 from Mesorhizobium japonicum (strain LMG 29417 / CECT 9101 / MAFF 303099) (Mesorhizobium loti (strain MAFF 303099)).